The following is a 109-amino-acid chain: MEKTSNTSKPLSRSEINKIIAVATGIKEKKIKEIFKYLNTLLLNELVSRSVCILPENLGKLRITIRNARYQKDMQTGEIRHIPPKPLVRYSPSKTIKETAAKVRWKYAD.

This is an uncharacterized protein from Mycoplasma genitalium (strain ATCC 33530 / DSM 19775 / NCTC 10195 / G37) (Mycoplasmoides genitalium).